Here is a 451-residue protein sequence, read N- to C-terminus: Bifunctional protein GlmU (451 aa).

The tract at residues 1-225 is pyrophosphorylase; that stretch reads MVVVAILAAG…YQEILGINDR (225 aa). UDP-N-acetyl-alpha-D-glucosamine contacts are provided by residues 7–10, lysine 21, glutamine 72, and 77–78; these read LAAG and GT. Position 102 (aspartate 102) interacts with Mg(2+). UDP-N-acetyl-alpha-D-glucosamine contacts are provided by glycine 139, glutamate 154, asparagine 169, and asparagine 223. Asparagine 223 serves as a coordination point for Mg(2+). Residues 226 to 246 form a linker region; that stretch reads LQLATAYEILQRRVKEQWMMA. The N-acetyltransferase stretch occupies residues 247–451; the sequence is GVTLIDPNSI…PGWRKKSGES (205 aa). Arginine 328 and lysine 346 together coordinate UDP-N-acetyl-alpha-D-glucosamine. The Proton acceptor role is filled by histidine 358. Positions 361 and 372 each coordinate UDP-N-acetyl-alpha-D-glucosamine. Residues alanine 375, 381–382, serine 400, alanine 418, and arginine 435 contribute to the acetyl-CoA site; that span reads NY.

In the N-terminal section; belongs to the N-acetylglucosamine-1-phosphate uridyltransferase family. It in the C-terminal section; belongs to the transferase hexapeptide repeat family. In terms of assembly, homotrimer. The cofactor is Mg(2+).

The protein resides in the cytoplasm. The enzyme catalyses alpha-D-glucosamine 1-phosphate + acetyl-CoA = N-acetyl-alpha-D-glucosamine 1-phosphate + CoA + H(+). It catalyses the reaction N-acetyl-alpha-D-glucosamine 1-phosphate + UTP + H(+) = UDP-N-acetyl-alpha-D-glucosamine + diphosphate. It functions in the pathway nucleotide-sugar biosynthesis; UDP-N-acetyl-alpha-D-glucosamine biosynthesis; N-acetyl-alpha-D-glucosamine 1-phosphate from alpha-D-glucosamine 6-phosphate (route II): step 2/2. It participates in nucleotide-sugar biosynthesis; UDP-N-acetyl-alpha-D-glucosamine biosynthesis; UDP-N-acetyl-alpha-D-glucosamine from N-acetyl-alpha-D-glucosamine 1-phosphate: step 1/1. The protein operates within bacterial outer membrane biogenesis; LPS lipid A biosynthesis. In terms of biological role, catalyzes the last two sequential reactions in the de novo biosynthetic pathway for UDP-N-acetylglucosamine (UDP-GlcNAc). The C-terminal domain catalyzes the transfer of acetyl group from acetyl coenzyme A to glucosamine-1-phosphate (GlcN-1-P) to produce N-acetylglucosamine-1-phosphate (GlcNAc-1-P), which is converted into UDP-GlcNAc by the transfer of uridine 5-monophosphate (from uridine 5-triphosphate), a reaction catalyzed by the N-terminal domain. The sequence is that of Bifunctional protein GlmU from Trichormus variabilis (strain ATCC 29413 / PCC 7937) (Anabaena variabilis).